A 446-amino-acid chain; its full sequence is uncharacterized protein (446 aa).

Residues 141 to 282 (TEAETNGTRP…GPKPKVKRVS (142 aa)) form a disordered region. Residues 159–170 (NSGSKPKAGTQS) are compositionally biased toward polar residues. Residues 194-210 (IKSERRSISQGGEKDKA) show a composition bias toward basic and acidic residues. 4 positions are modified to phosphoserine: S200, S202, S212, and S214. Composition is skewed to low complexity over residues 211 to 221 (SSSSPSSSQQS) and 229 to 239 (SPSQQNSRSSS). At S251 the chain carries Phosphoserine. Residues 269 to 280 (GKSRGPKPKVKR) show a composition bias toward basic residues. A phosphoserine mark is found at S282 and S307.

This is an uncharacterized protein from Drosophila melanogaster (Fruit fly).